The following is a 42-amino-acid chain: Tachystatin-B2 (42 aa).

3 disulfide bridges follow: Cys4–Cys20, Cys11–Cys25, and Cys19–Cys37.

In terms of tissue distribution, granular hemocytes, small secretory granules.

The protein localises to the secreted. Its function is as follows. Exhibits stronger antimicrobial activity against the Gram-positive bacteria (S.aureus (IC(50) is 7.4 ug/ml)) and fungi (C.albicans (IC(50) is 3.0 ug/ml) and P.pastoris (IC(50) is 0.1 ug/ml)) than Gram-negative bacteria (E.coli no inhibition at 100 ug/ml). Binds to chitin (4.3 uM are required to obtain 50% of binding). Does not cause hemolysis on sheep erythrocytes. Has no blocking activity on the P-type calcium channel. The sequence is that of Tachystatin-B2 from Tachypleus tridentatus (Japanese horseshoe crab).